A 148-amino-acid chain; its full sequence is Large ribosomal subunit protein bL9 (148 aa).

The protein belongs to the bacterial ribosomal protein bL9 family.

Its function is as follows. Binds to the 23S rRNA. This Stutzerimonas stutzeri (strain A1501) (Pseudomonas stutzeri) protein is Large ribosomal subunit protein bL9.